Reading from the N-terminus, the 443-residue chain is MSEMTPREIVHELDRHIIGQKNAKRAVSVALRNRWRRMQLSGDLRQEVTPKNILMIGPTGVGKTEIARRLAKLANAPFIKVEATKFTEVGYVGKEVETIIRDLADIAVKMAKEQETKKVKYRAEEAAEERILDVLLPPAENQWGEKEQNEDKGTRQTFRKKLREGQLDDKEIEIDVALPQVGVEIMAPPGMEEMTNQLQGMFQNLSGSQKKKKKLKIKEAFKLLIEEEAARLVNQEDLKANAIESLEQNGIVFIDEIDKICKREGSNSGGDVSREGVQRDLLPLVEGSTVSTKHGMVKTDHILFIASGAFQMAKPSDLIPELQGRLPIRVELEALTAGDFIRILTEPNASLTEQYIALLKTEGVDVDFTQDGIERIAQAAWQVNERTENIGARRLHTVMERLMEEISFDASEKSGEQLTVDAKYVNDHLEMLVENEDLSRFIL.

ATP-binding positions include isoleucine 18 and 60 to 65; that span reads GVGKTE. Residues 138 to 158 form a disordered region; it reads PAENQWGEKEQNEDKGTRQTF. Positions 143 to 154 are enriched in basic and acidic residues; the sequence is WGEKEQNEDKGT. Positions 255, 321, and 393 each coordinate ATP.

Belongs to the ClpX chaperone family. HslU subfamily. In terms of assembly, a double ring-shaped homohexamer of HslV is capped on each side by a ring-shaped HslU homohexamer. The assembly of the HslU/HslV complex is dependent on binding of ATP.

It is found in the cytoplasm. In terms of biological role, ATPase subunit of a proteasome-like degradation complex; this subunit has chaperone activity. The binding of ATP and its subsequent hydrolysis by HslU are essential for unfolding of protein substrates subsequently hydrolyzed by HslV. HslU recognizes the N-terminal part of its protein substrates and unfolds these before they are guided to HslV for hydrolysis. This Pseudoalteromonas atlantica (strain T6c / ATCC BAA-1087) protein is ATP-dependent protease ATPase subunit HslU.